The primary structure comprises 339 residues: Dihydroorotate dehydrogenase (quinone) (339 aa).

Residues 62 to 66 (AGMDK) and T86 each bind FMN. K66 provides a ligand contact to substrate. 111–115 (NRMGF) contributes to the substrate binding site. The FMN site is built by N139 and N172. Residue N172 coordinates substrate. S175 functions as the Nucleophile in the catalytic mechanism. Residue N177 coordinates substrate. K217 and T245 together coordinate FMN. 246 to 247 (NT) contributes to the substrate binding site. FMN contacts are provided by residues G268, G297, and 318 to 319 (YS).

This sequence belongs to the dihydroorotate dehydrogenase family. Type 2 subfamily. In terms of assembly, monomer. FMN is required as a cofactor.

Its subcellular location is the cell membrane. It catalyses the reaction (S)-dihydroorotate + a quinone = orotate + a quinol. Its pathway is pyrimidine metabolism; UMP biosynthesis via de novo pathway; orotate from (S)-dihydroorotate (quinone route): step 1/1. In terms of biological role, catalyzes the conversion of dihydroorotate to orotate with quinone as electron acceptor. This chain is Dihydroorotate dehydrogenase (quinone), found in Shewanella piezotolerans (strain WP3 / JCM 13877).